A 349-amino-acid chain; its full sequence is Putative transport protein jhp_0514 (349 aa).

The next 8 membrane-spanning stretches (helical) occupy residues 6–26 (FFWI…QDFL), 27–47 (MDAL…VFLN), 56–76 (SFLC…FIVY), 143–163 (LKLV…FYYG), 195–215 (VLLT…TMII), 224–244 (LGIL…LIWI), 258–278 (EAIF…DSVI), and 300–320 (ILIF…GIIV).

This sequence belongs to the autoinducer-2 exporter (AI-2E) (TC 2.A.86) family.

The protein localises to the cell membrane. The polypeptide is Putative transport protein jhp_0514 (Helicobacter pylori (strain J99 / ATCC 700824) (Campylobacter pylori J99)).